Consider the following 144-residue polypeptide: Eukaryotic translation initiation factor 1A, X-chromosomal (144 aa).

The segment covering 1–15 (MPKNKGKGGKNRRRG) has biased composition (basic residues). Disordered stretches follow at residues 1–26 (MPKNKGKGGKNRRRGKNENESEKREL) and 114–144 (KINETDTFGPGDDDEIQFDDIGDDDEDIDDI). Over residues 16-26 (KNENESEKREL) the composition is skewed to basic and acidic residues. The S1-like domain maps to 22 to 96 (EKRELVFKED…NKADVILKYN (75 aa)). A compositionally biased stretch (acidic residues) spans 124–144 (GDDDEIQFDDIGDDDEDIDDI).

Belongs to the eIF-1A family. Component of the 43S pre-initiation complex (43S PIC), which is composed of the 40S ribosomal subunit, EIF1, eIF1A (EIF1AX), eIF3 complex, EIF5 and eIF2-GTP-initiator tRNA complex (eIF2 ternary complex). Interacts with EIF5; this interaction contributes to the maintenance of EIF1 within the open 43S PIC. Interacts through its C-terminal domain (CTD) with the CTD of EIF5B; from the location of the start codon by the 43S complex until the formation of the 80S complex. As to quaternary structure, (Microbial infection) Interacts with human respiratory syncytial virus (HRSV) nucleoprotein; this interaction recruits EIF1AX to the viral replication complex to facilitate viral genomic RNA synthesis and virus production.

The protein resides in the cytoplasm. In terms of biological role, component of the 43S pre-initiation complex (43S PIC), which binds to the mRNA cap-proximal region, scans mRNA 5'-untranslated region, and locates the initiation codon. This protein enhances formation of the cap-proximal complex. Together with EIF1, facilitates scanning, start codon recognition, promotion of the assembly of 48S complex at the initiation codon (43S PIC becomes 48S PIC after the start codon is reached), and dissociation of aberrant complexes. After start codon location, together with EIF5B orients the initiator methionine-tRNA in a conformation that allows 60S ribosomal subunit joining to form the 80S initiation complex. Is released after 80S initiation complex formation, just after GTP hydrolysis by EIF5B, and before release of EIF5B. Its globular part is located in the A site of the 40S ribosomal subunit. Its interaction with EIF5 during scanning contribute to the maintenance of EIF1 within the open 43S PIC. In contrast to yeast orthologs, does not bind EIF1. The polypeptide is Eukaryotic translation initiation factor 1A, X-chromosomal (EIF1AX) (Homo sapiens (Human)).